A 207-amino-acid polypeptide reads, in one-letter code: Thiamine-phosphate synthase (207 aa).

4-amino-2-methyl-5-(diphosphooxymethyl)pyrimidine-binding positions include 36 to 40 (QLRMK) and Asn-68. The Mg(2+) site is built by Asp-69 and Asp-88. Ser-106 provides a ligand contact to 4-amino-2-methyl-5-(diphosphooxymethyl)pyrimidine. Residue 132 to 134 (TNT) participates in 2-[(2R,5Z)-2-carboxy-4-methylthiazol-5(2H)-ylidene]ethyl phosphate binding. Residue Lys-135 participates in 4-amino-2-methyl-5-(diphosphooxymethyl)pyrimidine binding. 2-[(2R,5Z)-2-carboxy-4-methylthiazol-5(2H)-ylidene]ethyl phosphate-binding positions include Gly-162 and 182–183 (VS).

It belongs to the thiamine-phosphate synthase family. Requires Mg(2+) as cofactor.

It catalyses the reaction 2-[(2R,5Z)-2-carboxy-4-methylthiazol-5(2H)-ylidene]ethyl phosphate + 4-amino-2-methyl-5-(diphosphooxymethyl)pyrimidine + 2 H(+) = thiamine phosphate + CO2 + diphosphate. The enzyme catalyses 2-(2-carboxy-4-methylthiazol-5-yl)ethyl phosphate + 4-amino-2-methyl-5-(diphosphooxymethyl)pyrimidine + 2 H(+) = thiamine phosphate + CO2 + diphosphate. It carries out the reaction 4-methyl-5-(2-phosphooxyethyl)-thiazole + 4-amino-2-methyl-5-(diphosphooxymethyl)pyrimidine + H(+) = thiamine phosphate + diphosphate. The protein operates within cofactor biosynthesis; thiamine diphosphate biosynthesis; thiamine phosphate from 4-amino-2-methyl-5-diphosphomethylpyrimidine and 4-methyl-5-(2-phosphoethyl)-thiazole: step 1/1. In terms of biological role, condenses 4-methyl-5-(beta-hydroxyethyl)thiazole monophosphate (THZ-P) and 2-methyl-4-amino-5-hydroxymethyl pyrimidine pyrophosphate (HMP-PP) to form thiamine monophosphate (TMP). This Methanococcus maripaludis (strain DSM 14266 / JCM 13030 / NBRC 101832 / S2 / LL) protein is Thiamine-phosphate synthase.